We begin with the raw amino-acid sequence, 200 residues long: MLQWLHSCWPFGKYRRQKYVPLDTSSSCPDRWKIEIEIAQPPGVFVGDILQNSDSDASLRQAYLLAVQLNNITDYLKRFDEASVPESCKSVVQTQITKLKSVRNIIWNTMLSMAVGGVTIDDAALKTLLDKRAGESIALIEMEKLATAIVMDDSKAWAKEINNIILSAEHEKQILVNSEVPLIECETLAAEKTTTPAVSI.

The S-palmitoyl cysteine; by host moiety is linked to residue C8.

It belongs to the herpesviridae UL51 family. As to quaternary structure, oligomerizes. Interacts with ORF42; this interaction mediates ORF42 incorporation to virions. In terms of processing, phosphorylated. Palmitoylation is necessary for Golgi localization.

The protein resides in the virion tegument. It localises to the host cytoplasm. The protein localises to the host Golgi apparatus. Its function is as follows. Plays several roles during the time course of infection, including egress of virus particles from the perinuclear space and secondary envelopment of cytoplasmic capsids that bud into specific trans-Golgi network (TGN)-derived membranes. In Saimiriine herpesvirus 2 (strain 11) (SaHV-2), this protein is Gene 55 protein (55).